Here is a 442-residue protein sequence, read N- to C-terminus: Probable carboxypeptidase PABG_01461 (442 aa).

A signal peptide spans 1-20; that stretch reads MKLQYLVALLSVQAVPPVTA. N102 is a glycosylation site (N-linked (GlcNAc...) asparagine). A Zn(2+)-binding site is contributed by D160. Residue E192 is the Proton acceptor of the active site. E193 is a binding site for Zn(2+). N-linked (GlcNAc...) asparagine glycosylation is present at N343.

It belongs to the peptidase M20A family. The cofactor is Zn(2+).

The protein localises to the secreted. The protein is Probable carboxypeptidase PABG_01461 of Paracoccidioides brasiliensis (strain Pb03).